We begin with the raw amino-acid sequence, 428 residues long: ETS domain-containing protein Elk-1 (428 aa).

The ETS DNA-binding region spans 5–86 (VTLWQFLLQL…SGQKFVYKFV (82 aa)). Disordered stretches follow at residues 121-149 (AAPG…ARSS), 165-205 (QSLQ…SPLE), and 228-358 (NLKS…SLLP). Low complexity predominate over residues 177 to 205 (PAVVLPSAAPAGAAAPPSGSRSTSPSPLE). Residues lysine 230, lysine 249, and lysine 254 each participate in a glycyl lysine isopeptide (Lys-Gly) (interchain with G-Cter in SUMO) cross-link. Residues 248-261 (VKVEGPKEELEVAG) are compositionally biased toward basic and acidic residues. Residue serine 324 is modified to Phosphoserine; by MAPK1. Phosphothreonine; by MAPK1 is present on residues threonine 336, threonine 353, threonine 363, and threonine 368. The interval 349 to 399 (GPALTPSLLPTHTLTPVLLTPSSLPPSIHFWSTLSPIAPRSPAKLSFQFPS) is sufficient for interaction with MAD2L2. O-linked (GlcNAc) threonine glycosylation is present at threonine 381. Serine 383 carries the phosphoserine; by MAPK1 and MAPK8 modification. Residue serine 389 is modified to Phosphoserine; by MAPK1. A Phosphothreonine; by MAPK1 modification is found at threonine 417. Position 422 is a phosphoserine; by MAPK1 (serine 422).

It belongs to the ETS family. Interacts in its sumoylated form with PIAS2/PIASX which enhances its transcriptional activator activity. Interacts with MAD2L2; the interaction is direct and promotes phosphorylation by the kinases MAPK8 and/or MAPK9. Interacts with POU1F1. In terms of processing, sumoylation represses transcriptional activator activity as it results in recruitment of HDAC2 to target gene promoters which leads to decreased histone acetylation and reduced transactivator activity. It also regulates nuclear retention. Post-translationally, on mitogenic stimulation, phosphorylated on C-terminal serine and threonine residues by MAPK1. Ser-383 and Ser-389 are the preferred sites for MAPK1. In vitro, phosphorylation by MAPK1 potentiates ternary complex formation with the serum responses factors, SRE and SRF. Also phosphorylated on Ser-383 by MAPK8 and/or MAKP9. Phosphorylation leads to loss of sumoylation and restores transcriptional activator activity. Phosphorylated and activated by CAMK4, MAPK11, MAPK12 and MAPK14. Upon bFGF stimulus, phosphorylated by PAK1. Phosphorylated by PRP4K at Thr-417; phosphorylation activation ELK1 transcriptional activity. Lung and testis.

The protein localises to the nucleus. Functionally, transcription factor that binds to purine-rich DNA sequences. Forms a ternary complex with SRF and the ETS and SRF motifs of the serum response element (SRE) on the promoter region of immediate early genes such as FOS and IER2. Induces target gene transcription upon JNK and MAPK-signaling pathways stimulation. The protein is ETS domain-containing protein Elk-1 of Homo sapiens (Human).